We begin with the raw amino-acid sequence, 462 residues long: ATP-dependent protease ATPase subunit HslU (462 aa).

Residues Ile-21, 63–68, Asp-275, Glu-340, and Arg-412 each bind ATP; that span reads GVGKTE.

Belongs to the ClpX chaperone family. HslU subfamily. In terms of assembly, a double ring-shaped homohexamer of HslV is capped on each side by a ring-shaped HslU homohexamer. The assembly of the HslU/HslV complex is dependent on binding of ATP.

Its subcellular location is the cytoplasm. In terms of biological role, ATPase subunit of a proteasome-like degradation complex; this subunit has chaperone activity. The binding of ATP and its subsequent hydrolysis by HslU are essential for unfolding of protein substrates subsequently hydrolyzed by HslV. HslU recognizes the N-terminal part of its protein substrates and unfolds these before they are guided to HslV for hydrolysis. The polypeptide is ATP-dependent protease ATPase subunit HslU (Pseudothermotoga lettingae (strain ATCC BAA-301 / DSM 14385 / NBRC 107922 / TMO) (Thermotoga lettingae)).